Here is a 445-residue protein sequence, read N- to C-terminus: 6-phosphogluconate dehydrogenase, decarboxylating (445 aa).

Residues Ala-1 to Gly-4, Asn-22 to Ser-24, Val-63 to Ala-65, and Asn-91 contribute to the NADP(+) site. Residues Asn-91 and Ser-117–Gly-119 contribute to the substrate site. The active-site Proton acceptor is the Lys-172. His-175–Asn-176 lines the substrate pocket. The active-site Proton donor is Glu-179. Residues Tyr-180, Lys-249, Arg-276, Arg-434, and His-440 each coordinate substrate.

This sequence belongs to the 6-phosphogluconate dehydrogenase family. Homodimer.

It carries out the reaction 6-phospho-D-gluconate + NADP(+) = D-ribulose 5-phosphate + CO2 + NADPH. It functions in the pathway carbohydrate degradation; pentose phosphate pathway; D-ribulose 5-phosphate from D-glucose 6-phosphate (oxidative stage): step 3/3. Functionally, catalyzes the oxidative decarboxylation of 6-phosphogluconate to ribulose 5-phosphate and CO(2), with concomitant reduction of NADP to NADPH. This is 6-phosphogluconate dehydrogenase, decarboxylating (gnd) from Pseudescherichia vulneris (Escherichia vulneris).